The following is a 574-amino-acid chain: MSSGIVLLIVAIVLVVIIAYLIAIIIRKRNDSLITKLEERKQNLFDLPVNDEIEEVKKLHLIGQSQTTFREWNQKWVDLSLNSFSDIENHIFEAENLNDTFNFIRAHSQINNIESQLNLAEEDIKAIREALAVLKEQEEKNSARVLHALEMYESLQASIEEGDSNFGITMPEIEKQLKNIEAEFSQFVTLNSSGDPVEASEILDRAEEHTIALGQMTEKIPAIVAKLEDDFPDQLDDLESGYRRLLEENYHFPEKNIEERFQEVREAIGNNSNELVSLDLDKAESENEAIQEKIDSLYDIFEREIRAHKNIVKSKKIIPAYLEHAKKNNEQLEAEIERLNHRYILNEKEELNVRDFNEEIASVEKDVLPIIENFDTQEKPFSVLEDKFDRAIKKLDLVEEGQLDVFNSLKNIENVEKTARQKLDSYINRLHAIKRFMEKRNLPGIPQDFLSVFFTTSAQLEALMDELNRARIHIETVNRMTEAATAAVENLEETAYRVVQNATLTEQLLQYSNRYRSFEPSVQESFDIALKLFETDYDYQGSFDEISYSLETVEPGVTDRFVSSYEKTRETIRF.

At 1–7 (MSSGIVL) the chain is on the extracellular side. The helical transmembrane segment at 8-26 (LIVAIVLVVIIAYLIAIII) threads the bilayer. Residues 27–574 (RKRNDSLITK…YEKTRETIRF (548 aa)) are Cytoplasmic-facing. Coiled-coil stretches lie at residues 102-141 (NFIR…EEKN), 255-368 (KNIE…KDVL), and 409-495 (LKNI…EETA).

It belongs to the EzrA family.

Its subcellular location is the cell membrane. In terms of biological role, negative regulator of FtsZ ring formation; modulates the frequency and position of FtsZ ring formation. Inhibits FtsZ ring formation at polar sites. Interacts either with FtsZ or with one of its binding partners to promote depolymerization. The sequence is that of Septation ring formation regulator EzrA from Streptococcus mutans serotype c (strain ATCC 700610 / UA159).